A 1670-amino-acid polypeptide reads, in one-letter code: DNA-directed RNA polymerase I subunit 1 (1670 aa).

6 residues coordinate Zn(2+): cysteine 79, cysteine 82, cysteine 89, histidine 92, cysteine 119, and cysteine 122. Residues 154-185 (ESNTPTKSKSSDESCESVVTTDSSEECEDSDV) are disordered. Residues 176 to 185 (SSEECEDSDV) are compositionally biased toward acidic residues. Residues cysteine 213 and cysteine 216 each coordinate Zn(2+). Positions 255 to 293 (TSSVENPDGFDDSGIDALSEVEDGDKETREKSTEVAAEF) are disordered. Acidic residues predominate over residues 262–279 (DGFDDSGIDALSEVEDGD). A compositionally biased stretch (basic and acidic residues) spans 280–293 (KETREKSTEVAAEF). Positions 602, 604, and 606 each coordinate Mg(2+). Residues 1005 to 1017 (PQEYYFHCMAGRE) are bridging helix. The tract at residues 1318 to 1437 (TGPIAGNETD…EQSKKKRRKF (120 aa)) is disordered. Acidic residues-rich tracts occupy residues 1339–1354 (DDGD…DDLG), 1366–1379 (DEMD…DETN), and 1388–1399 (EDPEMDSENEDT). Basic and acidic residues predominate over residues 1415 to 1429 (EPQKEVKGVKNVKEQ).

This sequence belongs to the RNA polymerase beta' chain family. In terms of assembly, component of the RNA polymerase I (Pol I) complex consisting of at least 13 subunits.

The protein localises to the nucleus. It carries out the reaction RNA(n) + a ribonucleoside 5'-triphosphate = RNA(n+1) + diphosphate. In terms of biological role, DNA-dependent RNA polymerase catalyzes the transcription of DNA into RNA using the four ribonucleoside triphosphates as substrates. Largest and catalytic core component of RNA polymerase I which synthesizes ribosomal RNA precursors. Forms the polymerase active center together with the second largest subunit. A single stranded DNA template strand of the promoter is positioned within the central active site cleft of Pol I. A bridging helix emanates from NRPA1 and crosses the cleft near the catalytic site and is thought to promote translocation of Pol I by acting as a ratchet that moves the RNA-DNA hybrid through the active site by switching from straight to bent conformations at each step of nucleotide addition. The protein is DNA-directed RNA polymerase I subunit 1 of Arabidopsis thaliana (Mouse-ear cress).